A 160-amino-acid chain; its full sequence is Probable NADH dehydrogenase [ubiquinone] 1 beta subcomplex subunit 2, mitochondrial (160 aa).

The protein belongs to the complex I NDUFB2 subunit family. As to quaternary structure, complex I is composed of 45 different subunits.

Its subcellular location is the mitochondrion inner membrane. Its function is as follows. Accessory subunit of the mitochondrial membrane respiratory chain NADH dehydrogenase (Complex I), that is believed not to be involved in catalysis. Complex I functions in the transfer of electrons from NADH to the respiratory chain. The immediate electron acceptor for the enzyme is believed to be ubiquinone. The sequence is that of Probable NADH dehydrogenase [ubiquinone] 1 beta subcomplex subunit 2, mitochondrial from Caenorhabditis elegans.